Reading from the N-terminus, the 219-residue chain is Interleukin-12 subunit alpha (219 aa).

The first 22 residues, 1–22 (MCPARSLLLVATLVLLDHLSLA), serve as a signal peptide directing secretion. Intrachain disulfides connect cysteine 37-cysteine 110, cysteine 64-cysteine 196, and cysteine 85-cysteine 123. N-linked (GlcNAc...) asparagine glycans are attached at residues asparagine 93 and asparagine 107.

The protein belongs to the IL-6 superfamily. Heterodimer with IL12B; disulfide-linked. This heterodimer is known as interleukin IL-12. Heterodimer with EBI3/IL27B; not disulfide-linked. This heterodimer is known as interleukin IL-35. Interacts with NBR1; this interaction promotes IL-12 secretion.

The protein resides in the secreted. In terms of biological role, heterodimerizes with IL12B to form the IL-12 cytokine or with EBI3/IL27B to form the IL-35 cytokine. IL-12 is primarily produced by professional antigen-presenting cells (APCs) such as B-cells and dendritic cells (DCs) as well as macrophages and granulocytes and regulates T-cell and natural killer-cell responses, induces the production of interferon-gamma (IFN-gamma), favors the differentiation of T-helper 1 (Th1) cells and is an important link between innate resistance and adaptive immunity. Mechanistically, exerts its biological effects through a receptor composed of IL12R1 and IL12R2 subunits. Binding to the receptor results in the rapid tyrosine phosphorylation of a number of cellular substrates including the JAK family kinases TYK2 and JAK2. In turn, recruited STAT4 gets phosphorylated and translocates to the nucleus where it regulates cytokine/growth factor responsive genes. As part of IL-35, plays essential roles in maintaining the immune homeostasis of the liver microenvironment and also functions as an immune-suppressive cytokine. Mediates biological events through unconventional receptors composed of IL12RB2 and gp130/IL6ST heterodimers or homodimers. Signaling requires the transcription factors STAT1 and STAT4, which form a unique heterodimer that binds to distinct DNA sites. In Homo sapiens (Human), this protein is Interleukin-12 subunit alpha (IL12A).